We begin with the raw amino-acid sequence, 127 residues long: Small ribosomal subunit protein uS13 (127 aa).

Residues 96-127 (LPCHGQRTSTNARTRKGPKRTAVKKKGAAKKK) form a disordered region. The segment covering 108 to 127 (RTRKGPKRTAVKKKGAAKKK) has biased composition (basic residues).

The protein belongs to the universal ribosomal protein uS13 family. Part of the 30S ribosomal subunit. Forms a loose heterodimer with protein S19. Forms two bridges to the 50S subunit in the 70S ribosome.

In terms of biological role, located at the top of the head of the 30S subunit, it contacts several helices of the 16S rRNA. In the 70S ribosome it contacts the 23S rRNA (bridge B1a) and protein L5 of the 50S subunit (bridge B1b), connecting the 2 subunits; these bridges are implicated in subunit movement. Contacts the tRNAs in the A and P-sites. The polypeptide is Small ribosomal subunit protein uS13 (Desulfosudis oleivorans (strain DSM 6200 / JCM 39069 / Hxd3) (Desulfococcus oleovorans)).